Consider the following 223-residue polypeptide: Transcriptional regulatory protein PhoP (223 aa).

A Response regulatory domain is found at 2–116 (RVLVVEDNAL…EVMARMQALM (115 aa)). Asp-51 carries the post-translational modification 4-aspartylphosphate. A DNA-binding region (ompR/PhoB-type) is located at residues 124–222 (SQVISLPPFQ…VRGQGYLFEL (99 aa)).

As to quaternary structure, monomer in the inactive, unphosphorylated state and dimer in the active, phosphorylated state. Post-translationally, phosphorylated by PhoQ.

It is found in the cytoplasm. Its activity is regulated as follows. Feedback inhibited by MgrB, which seems to bind PhoQ, altering its activity and that of downstream effector PhoP. PhoP-regulated transcription is redox-sensitive, being activated when the periplasm becomes more reducing (deletion of dsbA/dsbB, or treatment with dithiothreitol). MgrB acts between DsbA/DsbB and PhoP/PhoQ in this pathway. Its function is as follows. Member of the two-component regulatory system PhoP/PhoQ involved in adaptation to low Mg(2+) environments and the control of acid resistance genes. In low periplasmic Mg(2+), PhoQ phosphorylates PhoP, resulting in the expression of PhoP-activated genes (PAG) and repression of PhoP-repressed genes (PRG). In high periplasmic Mg(2+), PhoQ dephosphorylates phospho-PhoP, resulting in the repression of PAG and may lead to expression of some PRG. Mediates magnesium influx to the cytosol by activation of MgtA. Promotes expression of the two-component regulatory system rstA/rstB and transcription of the hemL, mgrB, nagA, slyB, vboR and yrbL genes. This Escherichia coli (strain K12) protein is Transcriptional regulatory protein PhoP (phoP).